A 95-amino-acid polypeptide reads, in one-letter code: Aspartyl/glutamyl-tRNA(Asn/Gln) amidotransferase subunit C (95 aa).

It belongs to the GatC family. As to quaternary structure, heterotrimer of A, B and C subunits.

The enzyme catalyses L-glutamyl-tRNA(Gln) + L-glutamine + ATP + H2O = L-glutaminyl-tRNA(Gln) + L-glutamate + ADP + phosphate + H(+). It carries out the reaction L-aspartyl-tRNA(Asn) + L-glutamine + ATP + H2O = L-asparaginyl-tRNA(Asn) + L-glutamate + ADP + phosphate + 2 H(+). Its function is as follows. Allows the formation of correctly charged Asn-tRNA(Asn) or Gln-tRNA(Gln) through the transamidation of misacylated Asp-tRNA(Asn) or Glu-tRNA(Gln) in organisms which lack either or both of asparaginyl-tRNA or glutaminyl-tRNA synthetases. The reaction takes place in the presence of glutamine and ATP through an activated phospho-Asp-tRNA(Asn) or phospho-Glu-tRNA(Gln). The sequence is that of Aspartyl/glutamyl-tRNA(Asn/Gln) amidotransferase subunit C from Bartonella bacilliformis (strain ATCC 35685 / KC583 / Herrer 020/F12,63).